Here is a 474-residue protein sequence, read N- to C-terminus: MFVVSEMADFIKAGGLGDVAAALPRALRHRYDVRVLIPGYRAVLERAGKVEIVGRVLAHAALPACDIGRIVQSDGLPIYILLSKELFERDGSPYVSTSGSEFEDNAIRFATLSHAAAQIAAGHAGLGWKPRLLHLNDWPCALAAGYVRWSGGTTPCLLTIHNLAYQGLVPYSMAAALGIPAERVAELEFYGQMSFLRGGIVNADHVNTVSVSYAKQITGPAQGCGLDRLLAGRAAKGALTGIVNGIDASWDPRTDQYLDSHFSVNQWQGRQANAAQVRKAFGLRESAGPLFAVVSRLVHQKGLDLICEVAPQIVAAGGQIAVIGGGEPEIEQQVAELTRRYPGQVGAFIGFEEGLARRMFAGADFLLMPSRFEPCGLSQMYAQRFGCLPIAHATGGLIDTVDDGVTGFLFQHASVEALRRCLERAFRTFRLPSLLSAMRRAAMLRPSGWDVAGKKYLSLYEHTAATAPALATVP.

ADP-alpha-D-glucose is bound at residue Lys-12.

The protein belongs to the glycosyltransferase 1 family. Bacterial/plant glycogen synthase subfamily.

It carries out the reaction [(1-&gt;4)-alpha-D-glucosyl](n) + ADP-alpha-D-glucose = [(1-&gt;4)-alpha-D-glucosyl](n+1) + ADP + H(+). The protein operates within glycan biosynthesis; glycogen biosynthesis. Functionally, synthesizes alpha-1,4-glucan chains using ADP-glucose. The chain is Glycogen synthase from Xanthomonas axonopodis pv. citri (strain 306).